A 101-amino-acid polypeptide reads, in one-letter code: NAD(P)H-quinone oxidoreductase subunit 4L, chloroplastic (101 aa).

The next 3 helical transmembrane spans lie at 2 to 22, 32 to 52, and 61 to 81; these read MLEHVLVLSAYLFSIGIYGLI, MCLELILNAVNLNFVTFSDFF, and IFSIFVIAIAAAEAAIGPAIV.

This sequence belongs to the complex I subunit 4L family. As to quaternary structure, NDH is composed of at least 16 different subunits, 5 of which are encoded in the nucleus.

It is found in the plastid. The protein localises to the chloroplast thylakoid membrane. It catalyses the reaction a plastoquinone + NADH + (n+1) H(+)(in) = a plastoquinol + NAD(+) + n H(+)(out). It carries out the reaction a plastoquinone + NADPH + (n+1) H(+)(in) = a plastoquinol + NADP(+) + n H(+)(out). NDH shuttles electrons from NAD(P)H:plastoquinone, via FMN and iron-sulfur (Fe-S) centers, to quinones in the photosynthetic chain and possibly in a chloroplast respiratory chain. The immediate electron acceptor for the enzyme in this species is believed to be plastoquinone. Couples the redox reaction to proton translocation, and thus conserves the redox energy in a proton gradient. The polypeptide is NAD(P)H-quinone oxidoreductase subunit 4L, chloroplastic (Manihot esculenta (Cassava)).